Here is a 237-residue protein sequence, read N- to C-terminus: UDP-Gal:alpha-D-GlcNAc-diphosphoundecaprenol beta-1,4-galactosyltransferase (237 aa).

Glu-101 acts as the Nucleophile in catalysis.

This sequence belongs to the glycosyltransferase 26 family. Mn(2+) serves as cofactor. It depends on Ni(2+) as a cofactor. Pb(2+) is required as a cofactor.

It catalyses the reaction N-acetyl-alpha-D-glucosaminyl-di-trans,octa-cis-undecaprenyl diphosphate + UDP-alpha-D-galactose = beta-D-Gal-(1-&gt;4)-alpha-D-GlcNAc-di-trans,octa-cis-undecaprenyl diphosphate + UDP + H(+). It participates in bacterial outer membrane biogenesis; LPS O-antigen biosynthesis. Galactosyltransferase that adds one galactose residue in the beta-1-4 linkage to GlcNAc-alpha-pyrophosphate-lipid in the biosynthesis of the O-polysaccharide repeating unit of the O antigen. The polypeptide is UDP-Gal:alpha-D-GlcNAc-diphosphoundecaprenol beta-1,4-galactosyltransferase (wfeD) (Shigella boydii).